Consider the following 387-residue polypeptide: L-aspartate:5-guanidino-3-methyl-2-oxopentanoate transaminase (387 aa).

Lys237 bears the N6-(pyridoxal phosphate)lysine mark.

Belongs to the class-I pyridoxal-phosphate-dependent aminotransferase family. Pyridoxal 5'-phosphate is required as a cofactor.

It catalyses the reaction (3R)-5-guanidino-3-methyl-2-oxopentanoate + L-aspartate = (3R)-3-methyl-L-arginine + oxaloacetate. Its pathway is antibiotic biosynthesis. Its function is as follows. Aminotransferase involved in the formation of the rare amino acid 3-methylarginine (MeArg), which is used as a potent antibiotic against the closely related soybean pathogen P.syringae pv. glycinea. Probably catalyzes transamination from the donor L-aspartate to 5-guanidino-3-methyl-2-oxopentanoic acid, generating 3-methylarginine. The protein is L-aspartate:5-guanidino-3-methyl-2-oxopentanoate transaminase of Pseudomonas syringae pv. syringae.